We begin with the raw amino-acid sequence, 109 residues long: Large ribosomal subunit protein uL24 (109 aa).

Belongs to the universal ribosomal protein uL24 family. In terms of assembly, part of the 50S ribosomal subunit.

Its function is as follows. One of two assembly initiator proteins, it binds directly to the 5'-end of the 23S rRNA, where it nucleates assembly of the 50S subunit. Functionally, one of the proteins that surrounds the polypeptide exit tunnel on the outside of the subunit. This Rickettsia canadensis (strain McKiel) protein is Large ribosomal subunit protein uL24.